Reading from the N-terminus, the 371-residue chain is 4-hydroxybenzoate polyprenyltransferase, mitochondrial (371 aa).

The N-terminal 34 residues, 1–34 (MLGSRAAGFARGLRAVALAWLPGWRGRSFALARA), are a transit peptide targeting the mitochondrion. The Mitochondrial matrix segment spans residues 35–83 (AGAPHGGDLQPPACPEPRGRQLSLSAAAVVDSAPRPLQPYLRLMRLDKP). The chain crosses the membrane as a helical span at residues 84-104 (IGTWLLYLPCTWSIGLAAEPG). Over 105-108 (CFPD) the chain is Mitochondrial intermembrane. A helical membrane pass occupies residues 109–129 (WYMLSLFGTGAILMRGAGCTI). Residues 130–148 (NDMWDQDYDKKVTRTANRP) are Mitochondrial matrix-facing. Residues 149–169 (IAAGDISTFQSFVFLGGQLTL) form a helical membrane-spanning segment. At 170–172 (ALG) the chain is on the mitochondrial intermembrane side. A helical transmembrane segment spans residues 173–193 (VLLCLNYYSIALGAGSLLLVI). Residues 194-203 (TYPLMKRISY) are Mitochondrial matrix-facing. Residues 204–224 (WPQLALGLTFNWGALLGWSAI) traverse the membrane as a helical segment. The Mitochondrial intermembrane portion of the chain corresponds to 225 to 231 (KGSCDPS). The helical transmembrane segment at 232-252 (VCLPLYFSGVMWTLIYDTIYA) threads the bilayer. The Mitochondrial matrix segment spans residues 253 to 277 (HQDKRDDVLIGLKSTALRFGENTKP). A helical transmembrane segment spans residues 278 to 298 (WLSGFSVAMLGALSLVGVNSG). Residues 299–300 (QT) are Mitochondrial intermembrane-facing. The helical transmembrane segment at 301 to 321 (APYYAALGAVGAHLTHQIYTL) threads the bilayer. The Mitochondrial matrix segment spans residues 322-332 (DIHRPEDCWNK). The chain crosses the membrane as a helical span at residues 333 to 353 (FISNRTLGLIVFLGIVLGNLW). Residues 354-371 (KEKKTDKTKKGIENKIEN) are Mitochondrial intermembrane-facing.

This sequence belongs to the UbiA prenyltransferase family. Mg(2+) is required as a cofactor. In terms of tissue distribution, widely expressed. Present in all of the tissues tested. Expressed at higher level in skeletal muscle, adrenal glands and the heart.

It is found in the mitochondrion inner membrane. The catalysed reaction is an all-trans-polyprenyl diphosphate + 4-hydroxybenzoate = a 4-hydroxy-3-(all-trans-polyprenyl)benzoate + diphosphate. It catalyses the reaction all-trans-decaprenyl diphosphate + 4-hydroxybenzoate = 4-hydroxy-3-(all-trans-decaprenyl)benzoate + diphosphate. The enzyme catalyses all-trans-nonaprenyl diphosphate + 4-hydroxybenzoate = 4-hydroxy-3-(all-trans-nonaprenyl)benzoate + diphosphate. It functions in the pathway cofactor biosynthesis; ubiquinone biosynthesis. Functionally, mediates the second step in the final reaction sequence of coenzyme Q (CoQ) biosynthesis. Catalyzes the prenylation of para-hydroxybenzoate (PHB) with an all-trans polyprenyl donor (such as all-trans-decaprenyl diphosphate). The length of the polyprenyl side chain varies depending on the species, in humans, the side chain is comprised of 10 isoprenyls (decaprenyl) producing CoQ10 (also known as ubiquinone), whereas rodents predominantly generate CoQ9. However, this specificity is not complete, human tissues have low amounts of CoQ9 and rodent organs contain some CoQ10. Plays a central role in the biosynthesis of CoQ10. CoQ10 is a vital molecule that transports electrons from mitochondrial respiratory chain complexes. CoQs also function as cofactors for uncoupling protein and play a role as regulators of the extracellularly-induced ceramide-dependent apoptotic pathway. Regulates mitochondrial permeability transition pore (mPTP) opening and ROS production (pivotal events in cell death) in a tissue specific manner. In Homo sapiens (Human), this protein is 4-hydroxybenzoate polyprenyltransferase, mitochondrial.